The chain runs to 402 residues: Putative FBD-associated F-box protein At5g56690 (402 aa).

The F-box domain occupies 1 to 47; it reads MAEISGLPDDLLVKILAFLPTKVAISTSVLSKQWRFLWMWLPKLKYD. The region spanning 349-401 is the FBD domain; sequence SWSKNQGSVPKCFLNSLETFRVKWYYSEEQEDRDFLSLIFKHARCLKSTSILH.

In Arabidopsis thaliana (Mouse-ear cress), this protein is Putative FBD-associated F-box protein At5g56690.